A 70-amino-acid chain; its full sequence is Large ribosomal subunit protein bL31 (70 aa).

Zn(2+) contacts are provided by C17, C19, C37, and C40.

The protein belongs to the bacterial ribosomal protein bL31 family. Type A subfamily. Part of the 50S ribosomal subunit. Requires Zn(2+) as cofactor.

Functionally, binds the 23S rRNA. The polypeptide is Large ribosomal subunit protein bL31 (Clostridium kluyveri (strain NBRC 12016)).